The chain runs to 118 residues: Large ribosomal subunit protein bL19 (118 aa).

It belongs to the bacterial ribosomal protein bL19 family.

Functionally, this protein is located at the 30S-50S ribosomal subunit interface and may play a role in the structure and function of the aminoacyl-tRNA binding site. The polypeptide is Large ribosomal subunit protein bL19 (Hahella chejuensis (strain KCTC 2396)).